Reading from the N-terminus, the 103-residue chain is Large ribosomal subunit protein eL42 (103 aa).

The disordered stretch occupies residues 37-56; sequence GKRRYDRKQSGFGGQTKPVF.

Belongs to the eukaryotic ribosomal protein eL42 family.

The chain is Large ribosomal subunit protein eL42 (rpl36a) from Dictyostelium discoideum (Social amoeba).